Consider the following 267-residue polypeptide: Indole-3-glycerol phosphate synthase (267 aa).

Belongs to the TrpC family.

It carries out the reaction 1-(2-carboxyphenylamino)-1-deoxy-D-ribulose 5-phosphate + H(+) = (1S,2R)-1-C-(indol-3-yl)glycerol 3-phosphate + CO2 + H2O. Its pathway is amino-acid biosynthesis; L-tryptophan biosynthesis; L-tryptophan from chorismate: step 4/5. The polypeptide is Indole-3-glycerol phosphate synthase (Verminephrobacter eiseniae (strain EF01-2)).